Consider the following 95-residue polypeptide: Cell division topological specificity factor (95 aa).

Belongs to the MinE family.

Its function is as follows. Prevents the cell division inhibition by proteins MinC and MinD at internal division sites while permitting inhibition at polar sites. This ensures cell division at the proper site by restricting the formation of a division septum at the midpoint of the long axis of the cell. This is Cell division topological specificity factor from Trichodesmium erythraeum (strain IMS101).